Consider the following 132-residue polypeptide: Small ribosomal subunit protein eS12 (132 aa).

This sequence belongs to the eukaryotic ribosomal protein eS12 family.

The sequence is that of Small ribosomal subunit protein eS12 (rps12) from Oreochromis niloticus (Nile tilapia).